The primary structure comprises 306 residues: UDP-N-acetylenolpyruvoylglucosamine reductase (306 aa).

Residues 28-193 (KVGGPADFLA…VSAKFSLKPG (166 aa)) form the FAD-binding PCMH-type domain. The active site involves Arg-172. Ser-222 functions as the Proton donor in the catalytic mechanism. Residue Glu-292 is part of the active site.

This sequence belongs to the MurB family. It depends on FAD as a cofactor.

It localises to the cytoplasm. The enzyme catalyses UDP-N-acetyl-alpha-D-muramate + NADP(+) = UDP-N-acetyl-3-O-(1-carboxyvinyl)-alpha-D-glucosamine + NADPH + H(+). The protein operates within cell wall biogenesis; peptidoglycan biosynthesis. Its function is as follows. Cell wall formation. In Streptococcus mutans serotype c (strain ATCC 700610 / UA159), this protein is UDP-N-acetylenolpyruvoylglucosamine reductase.